Here is a 251-residue protein sequence, read N- to C-terminus: Hydroxyacylglutathione hydrolase (251 aa).

Residues H53, H55, D57, H58, H110, D127, and H165 each coordinate Zn(2+).

This sequence belongs to the metallo-beta-lactamase superfamily. Glyoxalase II family. In terms of assembly, monomer. The cofactor is Zn(2+).

It catalyses the reaction an S-(2-hydroxyacyl)glutathione + H2O = a 2-hydroxy carboxylate + glutathione + H(+). Its pathway is secondary metabolite metabolism; methylglyoxal degradation; (R)-lactate from methylglyoxal: step 2/2. Thiolesterase that catalyzes the hydrolysis of S-D-lactoyl-glutathione to form glutathione and D-lactic acid. This Enterobacter sp. (strain 638) protein is Hydroxyacylglutathione hydrolase.